A 454-amino-acid chain; its full sequence is Aspartate aminotransferase P2, mitochondrial (454 aa).

Residues 1–49 (SSLLSIPSLSLQYNDKLKVGGNSLRFSKEQSNTFSNAKSSCRISMVAAV) constitute a mitochondrion transit peptide. L-aspartate contacts are provided by Gly86, Trp182, and Asn235. Lys299 carries the N6-(pyridoxal phosphate)lysine modification. Arg428 serves as a coordination point for L-aspartate.

The protein belongs to the class-I pyridoxal-phosphate-dependent aminotransferase family. In terms of assembly, homodimer. Pyridoxal 5'-phosphate serves as cofactor.

The protein resides in the mitochondrion matrix. It carries out the reaction L-aspartate + 2-oxoglutarate = oxaloacetate + L-glutamate. Functionally, important for the metabolism of amino acids and Krebs-cycle related organic acids. In plants, it is involved in nitrogen metabolism and in aspects of carbon and energy metabolism. In Lupinus angustifolius (Narrow-leaved blue lupine), this protein is Aspartate aminotransferase P2, mitochondrial.